A 64-amino-acid chain; its full sequence is Large ribosomal subunit protein bL35 (64 aa).

The interval 1-56 (MPKMKSNKSVAARFKLTGSGQLKRTRPGKRHKLSKKSSQEKRNLSKQPLVDKGQVG) is disordered. Residues 23 to 35 (KRTRPGKRHKLSK) show a composition bias toward basic residues.

This sequence belongs to the bacterial ribosomal protein bL35 family.

In Chlamydia abortus (strain DSM 27085 / S26/3) (Chlamydophila abortus), this protein is Large ribosomal subunit protein bL35.